The chain runs to 274 residues: Diaminopimelate epimerase (274 aa).

Substrate-binding residues include Asn11, Gln44, and Asn64. Catalysis depends on Cys73, which acts as the Proton donor. Substrate-binding positions include 74 to 75 (GN), Asn157, Asn190, and 208 to 209 (ER). Cys217 (proton acceptor) is an active-site residue. Position 218 to 219 (218 to 219 (GS)) interacts with substrate.

The protein belongs to the diaminopimelate epimerase family. Homodimer.

The protein localises to the cytoplasm. The catalysed reaction is (2S,6S)-2,6-diaminopimelate = meso-2,6-diaminopimelate. Its pathway is amino-acid biosynthesis; L-lysine biosynthesis via DAP pathway; DL-2,6-diaminopimelate from LL-2,6-diaminopimelate: step 1/1. Functionally, catalyzes the stereoinversion of LL-2,6-diaminopimelate (L,L-DAP) to meso-diaminopimelate (meso-DAP), a precursor of L-lysine and an essential component of the bacterial peptidoglycan. This chain is Diaminopimelate epimerase, found in Haemophilus influenzae (strain PittGG).